A 452-amino-acid chain; its full sequence is DNA primase DnaG (452 aa).

The region spanning 172–248 (DTVIIVEGRA…DIDYIARAPP (77 aa)) is the Toprim domain. The Mg(2+) site is built by Glu178, Asp222, and Asp224. A disordered region spans residues 289–320 (KKQIEQAQVQPSAAPTSPQPQPESTQPTQPIQ). Positions 294–320 (QAQVQPSAAPTSPQPQPESTQPTQPIQ) are enriched in low complexity.

The protein belongs to the archaeal DnaG primase family. Forms a ternary complex with MCM helicase and DNA. Component of the archaeal exosome complex. The cofactor is Mg(2+).

It catalyses the reaction ssDNA + n NTP = ssDNA/pppN(pN)n-1 hybrid + (n-1) diphosphate.. RNA polymerase that catalyzes the synthesis of short RNA molecules used as primers for DNA polymerase during DNA replication. Also part of the exosome, which is a complex involved in RNA degradation. Acts as a poly(A)-binding protein that enhances the interaction between heteromeric, adenine-rich transcripts and the exosome. This chain is DNA primase DnaG, found in Caldivirga maquilingensis (strain ATCC 700844 / DSM 13496 / JCM 10307 / IC-167).